The primary structure comprises 2403 residues: Highly reducing polyketide synthase fogA (2403 aa).

The 426-residue stretch at 3–428 (DDPPCIVGMA…GANAHVILES (426 aa)) folds into the Ketosynthase family 3 (KS3) domain. Residues Cys176, His311, and His350 each act as for beta-ketoacyl synthase activity in the active site. The malonyl-CoA:ACP transacylase (MAT) domain stretch occupies residues 538–858 (VFTGQGAQYA…PYAPSLVRKE (321 aa)). Catalysis depends on Ser632, which acts as the For malonyltransferase activity. An N-terminal hotdog fold region spans residues 929 to 1068 (HELLGTFALT…GSIRVVEPLT (140 aa)). A dehydratase (DH) domain region spans residues 929-1238 (HELLGTFALT…DARMSLYTGK (310 aa)). The 313-residue stretch at 929-1241 (HELLGTFALT…MSLYTGKSSA (313 aa)) folds into the PKS/mFAS DH domain. Residue His961 is the Proton acceptor; for dehydratase activity of the active site. Residues 1084-1241 (SFEASPTNRW…MSLYTGKSSA (158 aa)) form a C-terminal hotdog fold region. The Proton donor; for dehydratase activity role is filled by Asp1152. The interval 1663-1981 (GATDSMFFQQ…QQDRIGKIVI (319 aa)) is enoyl reductase (ER) domain. The interval 2006-2185 (VYLLIGCLGG…AVAVGLGMIS (180 aa)) is ketoreductase (KR) domain. The disordered stretch occupies residues 2280 to 2300 (AQNSTSSSGSNSNTPTTAAPW). The span at 2282–2296 (NSTSSSGSNSNTPTT) shows a compositional bias: low complexity. The Carrier domain maps to 2320 to 2398 (SLNAAILRLI…GLAVVVEGKL (79 aa)). Ser2357 carries the O-(pantetheine 4'-phosphoryl)serine modification.

It depends on pantetheine 4'-phosphate as a cofactor.

The protein operates within secondary metabolite biosynthesis. Highly reducing polyketide synthase; part of the gene cluster that mediates the biosynthesis of flavoglaucin and congeners (including aspergin, dihydroauroglaucin and auroglaucin), prenylated salicylaldehyde derivatives carrying a saturated or an unsaturated C-7 side chain. FogA releases the carboxylic acid (8E,10E,12E)-3,5,7-trihydroxytetradeca-8,10,12-trienoic acid as its product, as well as derivatives with one and two double bonds. FogA is indeed able to reduce the initial triketide, thus being at least partially responsible for the differently saturated heptyl side chains of flavoglaucin congeners. The oxidoreductases fogB, fogC and fogD modify the nascent polyketide in fogA-bound form and, together, fogA, fogB, fogC and fogD are necessary for the formation of the aromatic core and the cyclized PKS products are released as salicyl alcohols. In particular, fogB is responsible for oxidation of a hydroxyl group or reduction of remaining double bond(s) at the C-7 residue whereas fogD is probably involved in the reductive release of the modified PKS products. The cytochrome P450 monooxygenase fogE is then responsible for the hydroxylation at C-3 of the benzene ring. The fogE products are substrates of the prenyltransferase fogH and the prenylated benzyl alcohols are subsequently oxidized by the fogF to produce the final aryl aldehydes flavoglaucin and congeners. The short-chain dehydrogenase fogG does not seem to be involved in the biosynthesis of the prenylated salicylaldehyde derivatives. The protein is Highly reducing polyketide synthase fogA of Aspergillus ruber (strain CBS 135680).